We begin with the raw amino-acid sequence, 613 residues long: 4-hydroxy-3-methylbut-2-en-1-yl diphosphate synthase (flavodoxin) (613 aa).

Positions 514, 517, 548, and 555 each coordinate [4Fe-4S] cluster.

It belongs to the IspG family. Requires [4Fe-4S] cluster as cofactor.

The enzyme catalyses (2E)-4-hydroxy-3-methylbut-2-enyl diphosphate + oxidized [flavodoxin] + H2O + 2 H(+) = 2-C-methyl-D-erythritol 2,4-cyclic diphosphate + reduced [flavodoxin]. It functions in the pathway isoprenoid biosynthesis; isopentenyl diphosphate biosynthesis via DXP pathway; isopentenyl diphosphate from 1-deoxy-D-xylulose 5-phosphate: step 5/6. Converts 2C-methyl-D-erythritol 2,4-cyclodiphosphate (ME-2,4cPP) into 1-hydroxy-2-methyl-2-(E)-butenyl 4-diphosphate. The protein is 4-hydroxy-3-methylbut-2-en-1-yl diphosphate synthase (flavodoxin) of Chlamydia pneumoniae (Chlamydophila pneumoniae).